Here is a 481-residue protein sequence, read N- to C-terminus: Acetyltransferase peniE (481 aa).

Residues His164 and Asp411 each act as proton acceptor in the active site.

It belongs to the plant acyltransferase family. As to quaternary structure, monomer.

In terms of biological role, acetyltransferase; part of the gene cluster that mediates the biosynthesis of penifulvin A, a potent insecticidal sesquiterpene that features a [5.5.5.6]dioxafenestrane ring. The first step of the pathway is performed by the sesquiterpene cyclase peniA that generates the angular triquinane scaffold silphinene via cyclization of the linear farnesyl pyrophosphate (FPP). The cytochrome P450 monooxygenase peniB and the flavin-dependent monooxygenase peniC then catalyze a series of oxidation reactions to transform silphinene into penifulvin A. The dioxygenases peniD and peniF, as well as the acetyltransferase peniE, do not seem to be involved in the biosynthesis of penifulvin A. This chain is Acetyltransferase peniE, found in Penicillium patulum (Penicillium griseofulvum).